The primary structure comprises 260 residues: UPF0246 protein APL_0602 (260 aa).

It belongs to the UPF0246 family.

The chain is UPF0246 protein APL_0602 from Actinobacillus pleuropneumoniae serotype 5b (strain L20).